The chain runs to 113 residues: Dolichyl-diphosphooligosaccharide--protein glycosyltransferase subunit DAD1 (113 aa).

At serine 2 the chain carries N-acetylserine. Topologically, residues 2–30 (SASVLSVISRFLEEYLSSTPQRLKLLDAY) are cytoplasmic. The chain crosses the membrane as a helical span at residues 31–51 (LLYILLTGALQFGYCLLVGTF). Proline 52 is a topological domain (lumenal). The helical transmembrane segment at 53–73 (FNSFLSGFISCVGSFILAVCL) threads the bilayer. The Cytoplasmic segment spans residues 74-92 (RIQINPQNKADFQGISPER). A helical transmembrane segment spans residues 93–113 (AFADFLFASTILHLVVMNFVG).

This sequence belongs to the DAD/OST2 family. Component of the oligosaccharyltransferase (OST) complex. OST exists in two different complex forms which contain common core subunits RPN1, RPN2, OST48, OST4, DAD1 and TMEM258, either STT3A or STT3B as catalytic subunits, and form-specific accessory subunits. STT3A complex assembly occurs through the formation of 3 subcomplexes. Subcomplex 1 contains RPN1 and TMEM258, subcomplex 2 contains the STT3A-specific subunits STT3A, DC2/OSTC, and KCP2 as well as the core subunit OST4, and subcomplex 3 contains RPN2, DAD1, and OST48. The STT3A complex can form stable complexes with the Sec61 complex or with both the Sec61 and TRAP complexes.

It is found in the endoplasmic reticulum membrane. The protein operates within protein modification; protein glycosylation. Its function is as follows. Subunit of the oligosaccharyl transferase (OST) complex that catalyzes the initial transfer of a defined glycan (Glc(3)Man(9)GlcNAc(2) in eukaryotes) from the lipid carrier dolichol-pyrophosphate to an asparagine residue within an Asn-X-Ser/Thr consensus motif in nascent polypeptide chains, the first step in protein N-glycosylation. N-glycosylation occurs cotranslationally and the complex associates with the Sec61 complex at the channel-forming translocon complex that mediates protein translocation across the endoplasmic reticulum (ER). All subunits are required for a maximal enzyme activity. This Sus scrofa (Pig) protein is Dolichyl-diphosphooligosaccharide--protein glycosyltransferase subunit DAD1.